The sequence spans 253 residues: Endonuclease NucS (253 aa).

The protein belongs to the NucS endonuclease family.

Its subcellular location is the cytoplasm. In terms of biological role, cleaves both 3' and 5' ssDNA extremities of branched DNA structures. This Pyrococcus horikoshii (strain ATCC 700860 / DSM 12428 / JCM 9974 / NBRC 100139 / OT-3) protein is Endonuclease NucS.